A 124-amino-acid polypeptide reads, in one-letter code: uncharacterized protein (124 aa).

The GIY-YIG domain maps to 42–118; that stretch reads DKGGIFMFYN…INTQHSKYNI (77 aa).

This is an uncharacterized protein from Bacillus subtilis (strain 168).